A 219-amino-acid chain; its full sequence is Flagellin B4 (219 aa).

Positions 1 to 5 (MHRKG) are excised as a propeptide.

The protein belongs to the archaeal flagellin family.

It is found in the archaeal flagellum. In terms of biological role, flagellin is the subunit protein which polymerizes to form the filaments of archaeal flagella. The chain is Flagellin B4 (flaB4) from Pyrococcus abyssi (strain GE5 / Orsay).